Reading from the N-terminus, the 347-residue chain is uncharacterized protein (347 aa).

The protein belongs to the MG067/MG068/MG395 family.

This is an uncharacterized protein from Mycoplasma pneumoniae (strain ATCC 29342 / M129 / Subtype 1) (Mycoplasmoides pneumoniae).